Reading from the N-terminus, the 151-residue chain is D-aminoacyl-tRNA deacylase (151 aa).

Residues 139-140 (GP) carry the Gly-cisPro motif, important for rejection of L-amino acids motif.

Belongs to the DTD family. As to quaternary structure, homodimer.

It localises to the cytoplasm. The enzyme catalyses glycyl-tRNA(Ala) + H2O = tRNA(Ala) + glycine + H(+). It carries out the reaction a D-aminoacyl-tRNA + H2O = a tRNA + a D-alpha-amino acid + H(+). An aminoacyl-tRNA editing enzyme that deacylates mischarged D-aminoacyl-tRNAs. Also deacylates mischarged glycyl-tRNA(Ala), protecting cells against glycine mischarging by AlaRS. Acts via tRNA-based rather than protein-based catalysis; rejects L-amino acids rather than detecting D-amino acids in the active site. By recycling D-aminoacyl-tRNA to D-amino acids and free tRNA molecules, this enzyme counteracts the toxicity associated with the formation of D-aminoacyl-tRNA entities in vivo and helps enforce protein L-homochirality. The sequence is that of D-aminoacyl-tRNA deacylase from Symbiobacterium thermophilum (strain DSM 24528 / JCM 14929 / IAM 14863 / T).